The sequence spans 249 residues: Chitooligosaccharide deacetylase (249 aa).

Mg(2+) contacts are provided by H61 and H125.

The protein belongs to the YdjC deacetylase family. ChbG subfamily. In terms of assembly, homodimer. Mg(2+) serves as cofactor.

It localises to the cytoplasm. It carries out the reaction N,N'-diacetylchitobiose + H2O = N-acetyl-beta-D-glucosaminyl-(1-&gt;4)-D-glucosamine + acetate. The catalysed reaction is diacetylchitobiose-6'-phosphate + H2O = N'-monoacetylchitobiose-6'-phosphate + acetate. It functions in the pathway glycan degradation; chitin degradation. Involved in the degradation of chitin. ChbG is essential for growth on the acetylated chitooligosaccharides chitobiose and chitotriose but is dispensable for growth on cellobiose and chitosan dimer, the deacetylated form of chitobiose. Deacetylation of chitobiose-6-P and chitotriose-6-P is necessary for both the activation of the chb promoter by the regulatory protein ChbR and the hydrolysis of phosphorylated beta-glucosides by the phospho-beta-glucosidase ChbF. Catalyzes the removal of only one acetyl group from chitobiose-6-P to yield monoacetylchitobiose-6-P, the inducer of ChbR and the substrate of ChbF. This Escherichia coli O7:K1 (strain IAI39 / ExPEC) protein is Chitooligosaccharide deacetylase.